Consider the following 402-residue polypeptide: Putative RNA-guided DNA endonuclease (402 aa).

Aspartate 188 is an active-site residue. Positions 202-239 (KITNPKHERRDRARLAKAQRDVSRKAKGSANRKKARRK) are disordered. A compositionally biased stretch (basic and acidic residues) spans 204–225 (TNPKHERRDRARLAKAQRDVSR). Basic residues predominate over residues 226 to 239 (KAKGSANRKKARRK). The active site involves glutamate 272. 4 residues coordinate Zn(2+): cysteine 325, cysteine 328, cysteine 344, and cysteine 346. Aspartate 353 is an active-site residue. A disordered region spans residues 373 to 402 (GIRPQRESSRTGRSSVKQEPQRATAGIPRL).

It in the N-terminal section; belongs to the transposase 2 family. The protein in the C-terminal section; belongs to the transposase 35 family.

In terms of biological role, an RNA-guided dsDNA endonuclease. When guided by an RNA derived from the right-end element of its insertion sequence element (IS), cleaves DNA downstream of the transposon-associated motif (TAM). Cleaves supercoiled and linear DNA in a staggered manner 15-21 bases from the TAM yielding 5'-overhangs. Binds reRNA, an approximately 150 nucleotide base sRNA derived from the 3' end of its own gene, the right end (RE) of the insertion sequence (IS) plus sequence downstream of the IS. The protein is Putative RNA-guided DNA endonuclease of Streptomyces pristinaespiralis.